The sequence spans 498 residues: ATP synthase subunit beta, chloroplastic (498 aa).

Residue 172 to 179 coordinates ATP; sequence GGAGVGKT.

It belongs to the ATPase alpha/beta chains family. In terms of assembly, F-type ATPases have 2 components, CF(1) - the catalytic core - and CF(0) - the membrane proton channel. CF(1) has five subunits: alpha(3), beta(3), gamma(1), delta(1), epsilon(1). CF(0) has four main subunits: a(1), b(1), b'(1) and c(9-12).

The protein resides in the plastid. The protein localises to the chloroplast thylakoid membrane. It catalyses the reaction ATP + H2O + 4 H(+)(in) = ADP + phosphate + 5 H(+)(out). Its function is as follows. Produces ATP from ADP in the presence of a proton gradient across the membrane. The catalytic sites are hosted primarily by the beta subunits. The sequence is that of ATP synthase subunit beta, chloroplastic from Whiteheadia bifolia (Elephants ears).